The chain runs to 240 residues: Pyridoxine 5'-phosphate synthase (240 aa).

3-amino-2-oxopropyl phosphate is bound at residue Asn6. 8–9 lines the 1-deoxy-D-xylulose 5-phosphate pocket; that stretch reads DH. Position 17 (Arg17) interacts with 3-amino-2-oxopropyl phosphate. The active-site Proton acceptor is His42. Arg44 and His49 together coordinate 1-deoxy-D-xylulose 5-phosphate. The Proton acceptor role is filled by Glu69. 1-deoxy-D-xylulose 5-phosphate is bound at residue Thr99. Catalysis depends on His193, which acts as the Proton donor. 3-amino-2-oxopropyl phosphate-binding positions include Gly194 and 216–217; that span reads GH.

The protein belongs to the PNP synthase family. Homooctamer; tetramer of dimers.

Its subcellular location is the cytoplasm. The catalysed reaction is 3-amino-2-oxopropyl phosphate + 1-deoxy-D-xylulose 5-phosphate = pyridoxine 5'-phosphate + phosphate + 2 H2O + H(+). The protein operates within cofactor biosynthesis; pyridoxine 5'-phosphate biosynthesis; pyridoxine 5'-phosphate from D-erythrose 4-phosphate: step 5/5. Functionally, catalyzes the complicated ring closure reaction between the two acyclic compounds 1-deoxy-D-xylulose-5-phosphate (DXP) and 3-amino-2-oxopropyl phosphate (1-amino-acetone-3-phosphate or AAP) to form pyridoxine 5'-phosphate (PNP) and inorganic phosphate. The protein is Pyridoxine 5'-phosphate synthase of Hydrogenobaculum sp. (strain Y04AAS1).